A 431-amino-acid polypeptide reads, in one-letter code: Enolase (431 aa).

Q167 is a binding site for (2R)-2-phosphoglycerate. E209 (proton donor) is an active-site residue. Residues D246, E290, and D316 each coordinate Mg(2+). (2R)-2-phosphoglycerate is bound by residues K341, R370, S371, and K392. Residue K341 is the Proton acceptor of the active site.

Belongs to the enolase family. In terms of assembly, component of the RNA degradosome, a multiprotein complex involved in RNA processing and mRNA degradation. Mg(2+) is required as a cofactor.

It is found in the cytoplasm. The protein localises to the secreted. Its subcellular location is the cell surface. It carries out the reaction (2R)-2-phosphoglycerate = phosphoenolpyruvate + H2O. It participates in carbohydrate degradation; glycolysis; pyruvate from D-glyceraldehyde 3-phosphate: step 4/5. Catalyzes the reversible conversion of 2-phosphoglycerate (2-PG) into phosphoenolpyruvate (PEP). It is essential for the degradation of carbohydrates via glycolysis. The sequence is that of Enolase from Shigella flexneri serotype 5b (strain 8401).